Consider the following 202-residue polypeptide: Syndecan-4 (202 aa).

An N-terminal signal peptide occupies residues 1 to 22; that stretch reads MASPRLLALLLLLVGAFNAAAA. The Extracellular segment spans residues 23-152; the sequence is ESIRETEVIN…NIFERTEVLS (130 aa). 2 disordered regions span residues 41 to 75 and 87 to 112; these read YFSGDLPDDEDVGGPGQEPDDFEWSGSGDLEGPED and VPLDNHIPERTGPGGRVPTEPKELEE. S43 carries an O-linked (Xyl...) (glycosaminoglycan) serine glycan. Positions 46–63 are enriched in acidic residues; sequence LPDDEDVGGPGQEPDDFE. Residues S65 and S67 are each glycosylated (O-linked (Xyl...) (glycosaminoglycan) serine). Residues 153 to 173 form a helical membrane-spanning segment; the sequence is ALIVGGIVGILFAVFLVLLLV. Residues 174-202 lie on the Cytoplasmic side of the membrane; it reads YRMKKKDEGSYDLGKKPIYKKAPTNEFYA.

Belongs to the syndecan proteoglycan family. As to quaternary structure, homodimer. Interacts with CDCP1 and SDCBP. Interacts (via its cytoplasmic domain) with GIPC (via its PDZ domain). Interacts (via its cytoplasmic domain) with NUDT16L1. Interacts with DNM2; this interaction is markedly enhanced at focal ahesion site upon induction of focal adhesions and stress-fiber formation. Post-translationally, shedding, cleavage of the extracellular domain to release a soluble form, is enhanced by a number of factors such as heparanase, growth factor receptor action for example by thrombin or EGF. Physiological events such as stress or wound healing can activate the shedding. PMA-mediated shedding is inhibited by TIMP3. O-glycosylated; contains both chondroitin sulfate and heparan sulfate. Ser-43, Ser-65 and Ser-67 can all be modified by either chondroitin sulfate or heparan sulfate, and the protein exists in forms that contain only chondroitin sulfate, only heparan sulfate and both chondroitin sulfate and heparan sulfate.

It localises to the membrane. The protein localises to the secreted. Its function is as follows. Cell surface proteoglycan which regulates exosome biogenesis in concert with SDCBP and PDCD6IP. The chain is Syndecan-4 from Sus scrofa (Pig).